An 890-amino-acid polypeptide reads, in one-letter code: Translation initiation factor IF-2 (890 aa).

The interval 50-304 is disordered; that stretch reads LRQGSPEQEE…LQQEFERPTA (255 aa). Composition is skewed to basic and acidic residues over residues 112–125, 136–147, and 217–262; these read KRSDIEAEEKRKQE, RALEQEEAKREE, and ALKE…QEAK. One can recognise a tr-type G domain in the interval 390–559; it reads GRAPVVTVMG…VLQAELQELK (170 aa). The tract at residues 399-406 is G1; it reads GHVDHGKT. 399–406 is a GTP binding site; sequence GHVDHGKT. The segment at 424–428 is G2; sequence GITQH. The segment at 445–448 is G3; that stretch reads DTPG. GTP-binding positions include 445-449 and 499-502; these read DTPGH and NKMD. Residues 499 to 502 form a G4 region; that stretch reads NKMD. The segment at 535 to 537 is G5; it reads SAM.

This sequence belongs to the TRAFAC class translation factor GTPase superfamily. Classic translation factor GTPase family. IF-2 subfamily.

Its subcellular location is the cytoplasm. Functionally, one of the essential components for the initiation of protein synthesis. Protects formylmethionyl-tRNA from spontaneous hydrolysis and promotes its binding to the 30S ribosomal subunits. Also involved in the hydrolysis of GTP during the formation of the 70S ribosomal complex. The sequence is that of Translation initiation factor IF-2 from Halorhodospira halophila (strain DSM 244 / SL1) (Ectothiorhodospira halophila (strain DSM 244 / SL1)).